The sequence spans 299 residues: HTH-type transcriptional regulator ArgP (299 aa).

The region spanning 4 to 60 is the HTH lysR-type domain; that stretch reads PDYRTLQALDAVIRERGFERAAQKLCITQSAVSQRIKQLENMFGQPLLVRTVPPRPT. The segment at residues 21–40 is a DNA-binding region (H-T-H motif); it reads FERAAQKLCITQSAVSQRIK.

Belongs to the LysR transcriptional regulatory family. As to quaternary structure, homodimer.

Controls the transcription of genes involved in arginine and lysine metabolism. This chain is HTH-type transcriptional regulator ArgP, found in Erwinia tasmaniensis (strain DSM 17950 / CFBP 7177 / CIP 109463 / NCPPB 4357 / Et1/99).